The chain runs to 152 residues: Phosphoribosyl-AMP cyclohydrolase (152 aa).

Aspartate 92 contacts Mg(2+). Cysteine 93 is a Zn(2+) binding site. Aspartate 94 and aspartate 96 together coordinate Mg(2+). Residues cysteine 111 and cysteine 118 each coordinate Zn(2+).

Belongs to the PRA-CH family. Homodimer. The cofactor is Mg(2+). Zn(2+) serves as cofactor.

The protein resides in the cytoplasm. The enzyme catalyses 1-(5-phospho-beta-D-ribosyl)-5'-AMP + H2O = 1-(5-phospho-beta-D-ribosyl)-5-[(5-phospho-beta-D-ribosylamino)methylideneamino]imidazole-4-carboxamide. It participates in amino-acid biosynthesis; L-histidine biosynthesis; L-histidine from 5-phospho-alpha-D-ribose 1-diphosphate: step 3/9. Functionally, catalyzes the hydrolysis of the adenine ring of phosphoribosyl-AMP. This Sinorhizobium fredii (strain NBRC 101917 / NGR234) protein is Phosphoribosyl-AMP cyclohydrolase.